The chain runs to 235 residues: Large ribosomal subunit protein uL1 (235 aa).

It belongs to the universal ribosomal protein uL1 family. As to quaternary structure, part of the 50S ribosomal subunit.

In terms of biological role, binds directly to 23S rRNA. The L1 stalk is quite mobile in the ribosome, and is involved in E site tRNA release. Protein L1 is also a translational repressor protein, it controls the translation of the L11 operon by binding to its mRNA. This Fervidobacterium nodosum (strain ATCC 35602 / DSM 5306 / Rt17-B1) protein is Large ribosomal subunit protein uL1.